We begin with the raw amino-acid sequence, 229 residues long: Ras-related protein Rab-33B (229 aa).

Residues Asn-43, Val-44, Gly-45, Lys-46, Thr-47, Cys-48, Thr-62, and Thr-65 each contribute to the GTP site. Residue Thr-47 coordinates Mg(2+). Residues 56–68 (GRFPDRTEATIGV) carry the Switch 1 motif. Mg(2+)-binding residues include Thr-65 and Asp-88. Positions 89–108 (TAGQERFRKSMVQHYYRNVH) match the Switch 2 motif. 6 residues coordinate GTP: Gly-91, Asn-148, Lys-149, Asp-151, Ala-179, and Lys-180. 2 S-geranylgeranyl cysteine lipidation sites follow: Cys-227 and Cys-229. Cys-229 carries the cysteine methyl ester modification.

The protein belongs to the small GTPase superfamily. Rab family. As to quaternary structure, interacts (GTP- and GDP-bound forms) with ATG16L1; the complex consists of a tetramer where two RAB33B molecules bind independently one molecule of the ATG16L1 homodimer; the interaction promotes ATG12-ATG5-ATG16L1 complex recruitment to phagophores. Interacts with ATG16L2; however interaction is approximately hundred times lower than for ATG16L1. Interacts with RIC1 (via C-terminus domain); the interaction is direct with a preference for RAB33B-GTP. Interacts with RGP1. The cofactor is Mg(2+). In terms of processing, prenylated.

The protein resides in the golgi apparatus membrane. Its subcellular location is the golgi apparatus. The protein localises to the cis-Golgi network. It is found in the preautophagosomal structure membrane. The enzyme catalyses GTP + H2O = GDP + phosphate + H(+). Regulated by guanine nucleotide exchange factors (GEFs) which promote the exchange of bound GDP for free GTP. Regulated by GTPase activating proteins (GAPs) such as SGSM2 which increase the GTP hydrolysis activity. Inhibited by GDP dissociation inhibitors (GDIs). The small GTPases Rab are key regulators of intracellular membrane trafficking, from the formation of transport vesicles to their fusion with membranes. Rabs cycle between an inactive GDP-bound form and an active GTP-bound form that is able to recruit to membranes different sets of downstream effectors directly responsible for vesicle formation, movement, tethering and fusion. RAB33B acts, in coordination with RAB6A, to regulate intra-Golgi retrograde trafficking. Participates in autophagosome formation by recruiting the ATG12-ATG5-ATG16L1 complex to phagophores, probably in a nucleotide-independent manner. The chain is Ras-related protein Rab-33B from Homo sapiens (Human).